The following is a 239-amino-acid chain: DNA repair protein RecO (239 aa).

This sequence belongs to the RecO family.

Its function is as follows. Involved in DNA repair and RecF pathway recombination. This chain is DNA repair protein RecO, found in Bifidobacterium longum subsp. infantis (strain ATCC 15697 / DSM 20088 / JCM 1222 / NCTC 11817 / S12).